Consider the following 264-residue polypeptide: Sororin (264 aa).

A disordered region spans residues 1–45 (MAERRTRSGGAAQRSGPRTSLTKPSKSSKRKSGSDLPNSFSEIWP). Phosphoserine is present on residues Ser20, Ser32, Ser34, Ser78, and Ser82. Residues 87-89 (KEN) carry the KEN box motif. Thr97 is subject to Phosphothreonine. The residue at position 106 (Ser106) is a Phosphoserine. Thr110, Thr114, and Thr159 each carry phosphothreonine. The FGF motif signature appears at 166 to 168 (FGF). Ser222 is subject to Phosphoserine. The C-terminal Sororin domain stretch occupies residues 242–264 (LDKWAVAMNAEFEAAEQFELLIE).

The protein belongs to the sororin family. In terms of assembly, interacts with the APC/C complex. Interacts with the chromatin-bound cohesin complex; the interaction is indirect, occurs after DNA replication and requires acetylation of the cohesin component SMC3. Interacts (via the FGF motif) with PDS5A and PDS5B; the interaction is direct and prevents the interaction of PDS5A with WAPL. Post-translationally, phosphorylated. Phosphorylation, as cells enter mitosis, disrupts the interaction with PDS5A and relieves the inhibition of WAPL by CDCA5. In terms of processing, ubiquitinated by the APC/C complex in G1, leading to its degradation.

Its subcellular location is the nucleus. The protein resides in the chromosome. It is found in the cytoplasm. Functionally, regulator of sister chromatid cohesion in mitosis stabilizing cohesin complex association with chromatin. May antagonize the action of WAPL which stimulates cohesin dissociation from chromatin. Cohesion ensures that chromosome partitioning is accurate in both meiotic and mitotic cells and plays an important role in DNA repair. Required for efficient DNA double-stranded break repair. The sequence is that of Sororin (Cdca5) from Mus musculus (Mouse).